A 130-amino-acid chain; its full sequence is Protein ApaG (130 aa).

An ApaG domain is found at 3 to 127 (KAETRGISVT…FSLDVPHVRR (125 aa)).

This is Protein ApaG from Methylobacterium sp. (strain 4-46).